A 516-amino-acid chain; its full sequence is Protein indeterminate-domain 4, chloroplastic (516 aa).

Residues 1–26 (MSSSSYNTSVIPSSSSSAQPFFITSS) are compositionally biased toward low complexity. The tract at residues 1–68 (MSSSSYNTSV…QPGNPNPDAE (68 aa)) is disordered. The N-terminal 70 residues, 1–70 (MSSSSYNTSV…GNPNPDAEVV (70 aa)), are a transit peptide targeting the chloroplast. S73 bears the Phosphoserine mark. 2 C2H2-type zinc fingers span residues 83-105 (FICDVCNKGFQREQNLQLHRRGH) and 124-154 (YLCPEPTCVHHDPSRALGDLTGIKKHYYRKH). Residues 146–153 (IKKHYYRK) carry the Nuclear localization signal motif. Residues 159 to 182 (WKCEKCSKRYAVQSDWKAHSKTCG) form a C2H2-type 2; degenerate zinc finger. Zn(2+) contacts are provided by C161, C164, H177, C181, C188, C190, H203, and C207. A CCHC-type 2; atypical zinc finger spans residues 186-209 (YRCDCGTIFSRRDSYITHRAFCDA). The SHR-binding stretch occupies residues 196–208 (RRDSYITHRAFCD). Residues 483 to 516 (NRGGGGGGRGSARGGVSLDGEAKFPEQNYPFGRG) are disordered. A compositionally biased stretch (gly residues) spans 484 to 495 (RGGGGGGRGSAR).

In terms of assembly, binds to RGA and SCL3 competitively in the nucleus.

It is found in the plastid. The protein localises to the chloroplast. It localises to the nucleus. Its function is as follows. Transcription factor that may act a transcriptional activator of nuclear-encoded photosynthetic gene expression. Binds DNA via its zinc fingers. Recognizes and binds to SCL3 promoter sequence 5'-AGACAA-3' to promote its expression when in complex with RGA. This chain is Protein indeterminate-domain 4, chloroplastic, found in Arabidopsis thaliana (Mouse-ear cress).